We begin with the raw amino-acid sequence, 411 residues long: Elongation factor Tu, apicoplast (411 aa).

The tr-type G domain occupies 10–214; that stretch reads KPHVNIGTIG…TVDSYIEKPE (205 aa). Positions 19 to 26 are G1; it reads GHVDHGKT. 19–26 contributes to the GTP binding site; sequence GHVDHGKT. Threonine 26 contacts Mg(2+). The interval 61-65 is G2; it reads GITIN. Positions 82-85 are G3; that stretch reads DCPG. Residues 82-86 and 137-140 contribute to the GTP site; these read DCPGH and NKED. A G4 region spans residues 137–140; the sequence is NKED. The tract at residues 175–177 is G5; that stretch reads SAL.

The protein belongs to the TRAFAC class translation factor GTPase superfamily. Classic translation factor GTPase family. EF-Tu/EF-1A subfamily.

The protein resides in the plastid. It is found in the apicoplast. The enzyme catalyses GTP + H2O = GDP + phosphate + H(+). Its function is as follows. GTP hydrolase that promotes the GTP-dependent binding of aminoacyl-tRNA to the A-site of ribosomes during protein biosynthesis. The sequence is that of Elongation factor Tu, apicoplast (tufA) from Theileria parva (East coast fever infection agent).